The following is a 486-amino-acid chain: Protein nucleotidyltransferase YdiU (486 aa).

The ATP site is built by Gly-89, Gly-91, Arg-92, Lys-112, Asp-124, Gly-125, Arg-175, and Arg-182. Catalysis depends on Asp-251, which acts as the Proton acceptor. Mg(2+) contacts are provided by Asn-252 and Asp-261. Asp-261 is a binding site for ATP.

Belongs to the SELO family. The cofactor is Mg(2+). Mn(2+) serves as cofactor.

It carries out the reaction L-seryl-[protein] + ATP = 3-O-(5'-adenylyl)-L-seryl-[protein] + diphosphate. The catalysed reaction is L-threonyl-[protein] + ATP = 3-O-(5'-adenylyl)-L-threonyl-[protein] + diphosphate. It catalyses the reaction L-tyrosyl-[protein] + ATP = O-(5'-adenylyl)-L-tyrosyl-[protein] + diphosphate. The enzyme catalyses L-histidyl-[protein] + UTP = N(tele)-(5'-uridylyl)-L-histidyl-[protein] + diphosphate. It carries out the reaction L-seryl-[protein] + UTP = O-(5'-uridylyl)-L-seryl-[protein] + diphosphate. The catalysed reaction is L-tyrosyl-[protein] + UTP = O-(5'-uridylyl)-L-tyrosyl-[protein] + diphosphate. In terms of biological role, nucleotidyltransferase involved in the post-translational modification of proteins. It can catalyze the addition of adenosine monophosphate (AMP) or uridine monophosphate (UMP) to a protein, resulting in modifications known as AMPylation and UMPylation. The sequence is that of Protein nucleotidyltransferase YdiU from Shouchella clausii (strain KSM-K16) (Alkalihalobacillus clausii).